Reading from the N-terminus, the 112-residue chain is Cytochrome c (112 aa).

The heme c site is built by C23, C26, H27, and M89.

It belongs to the cytochrome c family. Binds 1 heme c group covalently per subunit.

The protein resides in the mitochondrion intermembrane space. Its function is as follows. Electron carrier protein. The oxidized form of the cytochrome c heme group can accept an electron from the heme group of the cytochrome c1 subunit of cytochrome reductase. Cytochrome c then transfers this electron to the cytochrome oxidase complex, the final protein carrier in the mitochondrial electron-transport chain. This chain is Cytochrome c (CYC1), found in Chlamydomonas reinhardtii (Chlamydomonas smithii).